The primary structure comprises 690 residues: Glycine--tRNA ligase beta subunit (690 aa).

This sequence belongs to the class-II aminoacyl-tRNA synthetase family. As to quaternary structure, tetramer of two alpha and two beta subunits.

Its subcellular location is the cytoplasm. It catalyses the reaction tRNA(Gly) + glycine + ATP = glycyl-tRNA(Gly) + AMP + diphosphate. The chain is Glycine--tRNA ligase beta subunit from Buchnera aphidicola subsp. Acyrthosiphon pisum (strain Tuc7).